The primary structure comprises 332 residues: MTTQLDRVVLIGVAGDSGCGKSTFLRRLTDLFGEEFMTVICLDDYHSLDRQGRKAAGVTALDPRANNFDLMYEQIKTLKSGQSIMKPIYNHETGLLDPPEKVEPNKVVVIEGLHPLYDERVRELVDFGVYLDISEEVKINWKIQRDMAERGHTYEDILASINARKPDFTAYIEPQKQYADVVIQVLPTRLIEDKESKLLRVRLVQKEGVKFFEPAYLFDEGSTIDWRPCGRKLTCTYPGIKMYYGPDNFMGNEVSLLEVDGRFENLEEMVYVENHLSKTGTKYYGEMTELLLKHKDYPGTDNGTGLFQVLVGLKMRKVYEQLTAEAKVPASV.

The protein belongs to the phosphoribulokinase family.

It carries out the reaction D-ribulose 5-phosphate + ATP = D-ribulose 1,5-bisphosphate + ADP + H(+). It participates in carbohydrate biosynthesis; Calvin cycle. This chain is Phosphoribulokinase (prk), found in Synechocystis sp. (strain ATCC 27184 / PCC 6803 / Kazusa).